The chain runs to 461 residues: Asparagine--tRNA ligase (461 aa).

It belongs to the class-II aminoacyl-tRNA synthetase family. Homodimer.

It localises to the cytoplasm. The catalysed reaction is tRNA(Asn) + L-asparagine + ATP = L-asparaginyl-tRNA(Asn) + AMP + diphosphate + H(+). The chain is Asparagine--tRNA ligase from Nitratidesulfovibrio vulgaris (strain DP4) (Desulfovibrio vulgaris).